The sequence spans 826 residues: Arsenite oxidase subunit AioA (826 aa).

3 residues coordinate [3Fe-4S] cluster: Cys22, Cys25, and Cys29. 4 residues coordinate substrate: His196, Glu204, Arg419, and His423.

It belongs to the prokaryotic molybdopterin-containing oxidoreductase family. In terms of assembly, heterodimer consisting of a large and a small subunit. Requires [3Fe-4S] cluster as cofactor. The cofactor is Mo-bis(molybdopterin guanine dinucleotide).

It catalyses the reaction 2 oxidized [azurin] + arsenite + H2O = 2 reduced [azurin] + arsenate + 3 H(+). In terms of biological role, involved in the detoxification of arsenic. Oxidizes As(III)O3(3-) (arsenite) to the somewhat less toxic As(V)O4(3-) (arsenate). This is Arsenite oxidase subunit AioA (aioA) from Herminiimonas arsenicoxydans.